The chain runs to 534 residues: Ulvan lyase NLR42 (534 aa).

The N-terminal stretch at methionine 1–threonine 47 is a signal peptide. Cysteines 59 and 89 form a disulfide. The Ca(2+) site is built by glycine 63, asparagine 68, aspartate 86, threonine 88, alanine 91, and aspartate 92. Tyrosine 164 contacts substrate. Catalysis depends on lysine 169, which acts as the Proton acceptor. Residues serine 218–arginine 223 and tyrosine 288–lysine 291 each bind substrate. The active-site Proton donor/acceptor is tyrosine 288. The tract at residues proline 316–leucine 449 is ulvan-binding domain. The propeptide at serine 450–asparagine 534 is removed by the type IX secretion system (T9SS).

This sequence belongs to the polysaccharide lyase 28 family. Ca(2+) serves as cofactor.

The protein resides in the secreted. Its function is as follows. Ulvan lyase involved in ulvan degradation. Ulvan is the main polysaccharide component of the Ulvales (green seaweed) cell wall. It is composed of disaccharide building blocks comprising 3-sulfated rhamnose (Rha3S) linked to D-glucuronic acid (GlcA), L-iduronic acid (IduA), or D-xylose (Xyl). Ulvan lyase catalyzes the endolytic cleavage of the glycosidic bond between Rha3S and the uronic acids GlcA or IduA, producing oligosaccharides that have unsaturated 4-deoxy-L-threo-hex-4-enopyranosiduronic acid (deltaUA) at the non-reducing end. This results eventually in the degradation of the ulvan polysaccharide into deltaUA-Rha3S disaccharides and deltaUA-Rha3S-Xyl-Rha3S tetrasaccharides. The polypeptide is Ulvan lyase NLR42 (Nonlabens ulvanivorans (Persicivirga ulvanivorans)).